The primary structure comprises 155 residues: uncharacterized protein (155 aa).

The first 23 residues, 1–23, serve as a signal peptide directing secretion; the sequence is MKIRSLSRFVLASTMFASFTASA.

It to E.coli YkfB.

This is an uncharacterized protein from Escherichia coli (strain K12).